A 119-amino-acid polypeptide reads, in one-letter code: Protein yippee-like 2 (119 aa).

The region spanning 19–116 (RTYSCIHCRA…IELAHMIKDN (98 aa)) is the Yippee domain. The Zn(2+) site is built by Cys-23, Cys-26, Cys-79, and Cys-82.

Belongs to the yippee family. May interact with FAM168B.

The protein resides in the nucleus. The protein localises to the nucleolus. The protein is Protein yippee-like 2 (YPEL2) of Chlorocebus aethiops (Green monkey).